Here is a 510-residue protein sequence, read N- to C-terminus: ATP synthase subunit alpha (510 aa).

An ATP-binding site is contributed by 169-176 (GDRQTGKT).

It belongs to the ATPase alpha/beta chains family. As to quaternary structure, F-type ATPases have 2 components, CF(1) - the catalytic core - and CF(0) - the membrane proton channel. CF(1) has five subunits: alpha(3), beta(3), gamma(1), delta(1), epsilon(1). CF(0) has three main subunits: a(1), b(2) and c(9-12). The alpha and beta chains form an alternating ring which encloses part of the gamma chain. CF(1) is attached to CF(0) by a central stalk formed by the gamma and epsilon chains, while a peripheral stalk is formed by the delta and b chains.

It is found in the cell inner membrane. The catalysed reaction is ATP + H2O + 4 H(+)(in) = ADP + phosphate + 5 H(+)(out). Its function is as follows. Produces ATP from ADP in the presence of a proton gradient across the membrane. The alpha chain is a regulatory subunit. In Methylobacterium radiotolerans (strain ATCC 27329 / DSM 1819 / JCM 2831 / NBRC 15690 / NCIMB 10815 / 0-1), this protein is ATP synthase subunit alpha.